Here is a 38-residue protein sequence, read N- to C-terminus: Large ribosomal subunit protein bL36 (38 aa).

It belongs to the bacterial ribosomal protein bL36 family.

The sequence is that of Large ribosomal subunit protein bL36 from Aster yellows witches'-broom phytoplasma (strain AYWB).